Consider the following 393-residue polypeptide: Formate-dependent phosphoribosylglycinamide formyltransferase (393 aa).

Residues 22–23 and Glu-82 contribute to the N(1)-(5-phospho-beta-D-ribosyl)glycinamide site; that span reads EL. Residues Arg-114, Lys-155, 160–165, 195–198, and Glu-203 each bind ATP; these read SSGKGQ and EGFI. Residues 119 to 308 enclose the ATP-grasp domain; the sequence is RLAAEELDLP…QFALHARAIL (190 aa). The Mg(2+) site is built by Glu-267 and Glu-279. Residues Asp-286, Lys-356, and 363 to 364 contribute to the N(1)-(5-phospho-beta-D-ribosyl)glycinamide site; that span reads RR.

This sequence belongs to the PurK/PurT family. As to quaternary structure, homodimer.

It catalyses the reaction N(1)-(5-phospho-beta-D-ribosyl)glycinamide + formate + ATP = N(2)-formyl-N(1)-(5-phospho-beta-D-ribosyl)glycinamide + ADP + phosphate + H(+). It functions in the pathway purine metabolism; IMP biosynthesis via de novo pathway; N(2)-formyl-N(1)-(5-phospho-D-ribosyl)glycinamide from N(1)-(5-phospho-D-ribosyl)glycinamide (formate route): step 1/1. Its function is as follows. Involved in the de novo purine biosynthesis. Catalyzes the transfer of formate to 5-phospho-ribosyl-glycinamide (GAR), producing 5-phospho-ribosyl-N-formylglycinamide (FGAR). Formate is provided by PurU via hydrolysis of 10-formyl-tetrahydrofolate. In Pseudomonas putida (strain ATCC 47054 / DSM 6125 / CFBP 8728 / NCIMB 11950 / KT2440), this protein is Formate-dependent phosphoribosylglycinamide formyltransferase.